Reading from the N-terminus, the 373-residue chain is Probable peptidoglycan glycosyltransferase FtsW (373 aa).

The next 9 membrane-spanning stretches (helical) occupy residues 15 to 35 (LVIL…VYSA), 48 to 68 (FYFL…MAVA), 80 to 100 (AVPI…PGIG), 144 to 164 (FFST…LILL), 168 to 188 (DLGA…AAGT), 192 to 212 (YIIA…MNVD), 278 to 298 (LGLI…LRGV), 311 to 331 (FLAF…MAVV), and 342 to 362 (LPFI…VGIL).

Belongs to the SEDS family. FtsW subfamily.

Its subcellular location is the cell inner membrane. The catalysed reaction is [GlcNAc-(1-&gt;4)-Mur2Ac(oyl-L-Ala-gamma-D-Glu-L-Lys-D-Ala-D-Ala)](n)-di-trans,octa-cis-undecaprenyl diphosphate + beta-D-GlcNAc-(1-&gt;4)-Mur2Ac(oyl-L-Ala-gamma-D-Glu-L-Lys-D-Ala-D-Ala)-di-trans,octa-cis-undecaprenyl diphosphate = [GlcNAc-(1-&gt;4)-Mur2Ac(oyl-L-Ala-gamma-D-Glu-L-Lys-D-Ala-D-Ala)](n+1)-di-trans,octa-cis-undecaprenyl diphosphate + di-trans,octa-cis-undecaprenyl diphosphate + H(+). Its pathway is cell wall biogenesis; peptidoglycan biosynthesis. Peptidoglycan polymerase that is essential for cell division. This chain is Probable peptidoglycan glycosyltransferase FtsW, found in Geobacter sulfurreducens (strain DL-1 / KN400).